The chain runs to 260 residues: Phosphatidylglycerol--prolipoprotein diacylglyceryl transferase (260 aa).

A run of 3 helical transmembrane segments spans residues 16 to 36, 55 to 75, and 87 to 107; these read LEFR…YFIV, VIFS…ILFY, and LFAV…VILA. Residue Arg-138 participates in a 1,2-diacyl-sn-glycero-3-phospho-(1'-sn-glycerol) binding. 2 helical membrane passes run 198-218 and 232-252; these read GVVF…VEFF and FSMG…MAVL.

This sequence belongs to the Lgt family.

The protein resides in the cell inner membrane. It catalyses the reaction L-cysteinyl-[prolipoprotein] + a 1,2-diacyl-sn-glycero-3-phospho-(1'-sn-glycerol) = an S-1,2-diacyl-sn-glyceryl-L-cysteinyl-[prolipoprotein] + sn-glycerol 1-phosphate + H(+). It functions in the pathway protein modification; lipoprotein biosynthesis (diacylglyceryl transfer). Functionally, catalyzes the transfer of the diacylglyceryl group from phosphatidylglycerol to the sulfhydryl group of the N-terminal cysteine of a prolipoprotein, the first step in the formation of mature lipoproteins. The polypeptide is Phosphatidylglycerol--prolipoprotein diacylglyceryl transferase (Geobacter sulfurreducens (strain ATCC 51573 / DSM 12127 / PCA)).